The following is a 679-amino-acid chain: PHD finger protein PERSISTENT TAPETAL CELL 1 (679 aa).

Residues 620 to 670 (VVDCACGAVDDDGERMACCDICEAWQHTRCAGIADTEDAPHVFLCSRCDND) form a PHD-type zinc finger.

Functionally, probable transcriptional activator required for tapetal programmed cell death (PCD) and degeneration, and pollen development in anthers. This chain is PHD finger protein PERSISTENT TAPETAL CELL 1, found in Oryza sativa subsp. japonica (Rice).